Consider the following 349-residue polypeptide: MATAAQRRFCRCACFCSQNLYVARYGLHLRFRDEHQLRRDYGQLLRSRGCVTSKDFQQLLEELEQEVGRRRRLGQESAVRKALIASSYHPARPEVYSSLQDAALAPEFMAAAEYSTSPGADLEGLLQRLETVSEEKRIYRVPVFSAKFCQTLLEELEHFEQSDMPKGRPNTMNNHGVLMYELGLDDPLVTPLRERFLLPLMALLYPDYGGGYLDSHRAFVVKYALGQDLDLGCHYDNAELTLNVALGKDFTGGALYFGGLFQAPAALKETLEVEHVVGSGILHRGGQLHGARPLCKGERWNLVVWLRASAVRNRLCPMCCQKPELVDDEGFGDGFTREEPTTVDVCVLT.

Positions 214 to 308 (DSHRAFVVKY…RWNLVVWLRA (95 aa)) constitute a Fe2OG dioxygenase domain. 3 residues coordinate Fe cation: His234, Asp236, and His289. A 2-oxoglutarate-binding site is contributed by Arg299.

Belongs to the OGFOD2 family. The cofactor is Fe(2+). Requires L-ascorbate as cofactor.

The protein is 2-oxoglutarate and iron-dependent oxygenase domain-containing protein 2 (Ogfod2) of Mus musculus (Mouse).